The sequence spans 245 residues: Carboxymethylenebutenolidase homolog (245 aa).

Alanine 2 bears the N-acetylalanine mark. Residues cysteine 132, aspartate 179, and histidine 212 contribute to the active site. The residue at position 223 (serine 223) is a Phosphoserine.

This sequence belongs to the dienelactone hydrolase family.

It is found in the cytoplasm. The protein resides in the cytosol. Its function is as follows. Cysteine hydrolase. The chain is Carboxymethylenebutenolidase homolog (Cmbl) from Mus musculus (Mouse).